A 309-amino-acid polypeptide reads, in one-letter code: Calponin-2 (309 aa).

Ser2 carries the N-acetylserine modification. N6-acetyllysine is present on residues Lys8 and Lys25. Residues Pro28–Lys132 form the Calponin-homology (CH) domain. Ser138 is modified (phosphoserine). 3 Calponin-like repeats span residues Ile166–Tyr191, Ile206–Tyr231, and Met245–Tyr269. Residues Tyr273–Tyr309 are disordered. Residues Gly277–Gly288 show a composition bias toward low complexity.

The protein belongs to the calponin family.

Its function is as follows. Thin filament-associated protein that is implicated in the regulation and modulation of smooth muscle contraction. It is capable of binding to actin, calmodulin and tropomyosin. The interaction of calponin with actin inhibits the actomyosin Mg-ATPase activity. This chain is Calponin-2 (CNN2), found in Bos taurus (Bovine).